The primary structure comprises 241 residues: U2 small nuclear ribonucleoprotein B'' (241 aa).

The RRM 1 domain maps to 12 to 91; the sequence is QTLYVNNLYE…RPMKIQYCKS (80 aa). Residues 99–126 show a composition bias toward basic and acidic residues; the sequence is LDGTYMEKKREREENDKKGSNKKQDRKS. The tract at residues 99–169 is disordered; sequence LDGTYMEKKR…PRDDPPNKTL (71 aa). A compositionally biased stretch (low complexity) spans 129 to 152; it reads QQQQQQKRPGAPTSTTSTTSPTTS. An RRM 2 domain is found at 167-241; sequence KTLFVENLPD…KPMVVSFAAQ (75 aa).

Belongs to the RRM U1 A/B'' family. Identified in the spliceosome B complex. Identified in the spliceosome C complex.

Its subcellular location is the nucleus. In terms of biological role, involved in pre-mRNA splicing as component of the spliceosome. Associated with sn-RNP U2, where it contributes to the binding of stem loop IV of U2 snRNA. The chain is U2 small nuclear ribonucleoprotein B'' (snrpb2) from Dictyostelium discoideum (Social amoeba).